A 57-amino-acid chain; its full sequence is Zinc finger protein MJ0458.1 (57 aa).

4 consecutive short sequence motifs (c(P)XCG motif) follow at residues 8-12 (CISCN), 26-30 (CPNCG), 37-41 (CERCR), and 49-53 (CPKCG). The Zn(2+) site is built by C26 and C29. Positions 49 and 52 each coordinate Zn(2+).

As to quaternary structure, monomer in solution.

Its function is as follows. Zinc-binding protein that binds only one zinc ion. The protein is Zinc finger protein MJ0458.1 of Methanocaldococcus jannaschii (strain ATCC 43067 / DSM 2661 / JAL-1 / JCM 10045 / NBRC 100440) (Methanococcus jannaschii).